We begin with the raw amino-acid sequence, 341 residues long: Uroporphyrinogen decarboxylase (341 aa).

Substrate contacts are provided by residues 23–27 (RQAGR), aspartate 73, tyrosine 148, serine 203, and histidine 318.

It belongs to the uroporphyrinogen decarboxylase family. As to quaternary structure, homodimer.

Its subcellular location is the cytoplasm. It catalyses the reaction uroporphyrinogen III + 4 H(+) = coproporphyrinogen III + 4 CO2. It participates in porphyrin-containing compound metabolism; protoporphyrin-IX biosynthesis; coproporphyrinogen-III from 5-aminolevulinate: step 4/4. In terms of biological role, catalyzes the decarboxylation of four acetate groups of uroporphyrinogen-III to yield coproporphyrinogen-III. The chain is Uroporphyrinogen decarboxylase from Brucella suis (strain ATCC 23445 / NCTC 10510).